A 398-amino-acid chain; its full sequence is Autophagy-related protein 39 (398 aa).

The ATG8-binding motif lies at 8–11 (WNLV). The interval 15–50 (RLRKGREGEEQSSKSEISLDSLHESSFAGEDDEDFD) is disordered. The ATG11-binding motif lies at 52-59 (DVLSNTSS). The helical transmembrane segment at 148–164 (VIMLSSLLSMTFSYLAL) threads the bilayer.

In terms of assembly, interacts with ATG8 and ATG11.

The protein resides in the endoplasmic reticulum membrane. Its subcellular location is the preautophagosomal structure membrane. Acts as a receptor for reticulophagy and nucleophagy. Directs autophagic sequestration of double-membrane vesicles derived from the nuclear envelope and perinuclear endoplasmic reticulum (pnER) into autophagosomes. Is not required for the cytoplasm-to-vacuole targeting pathway, mitophagy, pexophagy, and non-selective autophagy. This chain is Autophagy-related protein 39, found in Saccharomyces cerevisiae (strain ATCC 204508 / S288c) (Baker's yeast).